The following is a 759-amino-acid chain: Protein transport protein sec23-1 (759 aa).

The Zn(2+) site is built by Cys56, Cys60, Cys79, and Cys82.

This sequence belongs to the SEC23/SEC24 family. SEC23 subfamily. The COPII coat is composed of at least 5 proteins: the sec23/24 complex, the sec13/31 complex, and the protein sar1.

It localises to the cytoplasm. It is found in the cytoplasmic vesicle. The protein localises to the COPII-coated vesicle membrane. Its subcellular location is the endoplasmic reticulum membrane. The protein resides in the golgi apparatus membrane. In terms of biological role, component of the coat protein complex II (COPII) which promotes the formation of transport vesicles from the endoplasmic reticulum (ER). The coat has two main functions, the physical deformation of the endoplasmic reticulum membrane into vesicles and the selection of cargo molecules. This Schizosaccharomyces pombe (strain 972 / ATCC 24843) (Fission yeast) protein is Protein transport protein sec23-1 (sec231).